The following is a 1484-amino-acid chain: Ral GTPase-activating protein subunit beta (1484 aa).

Disordered stretches follow at residues 355–437 (PRSD…APRR) and 697–728 (GGENNLKSHSRTNSGISSASGGSTEPTTPDSE). Ser359 is modified (phosphoserine). Phosphothreonine is present on residues Thr363 and Thr379. 3 stretches are compositionally biased toward polar residues: residues 369–381 (SMPQSAAVNTTPP), 392–428 (NKATMKTSTVTTAHTSKVQHQASSTSPLSSPNQTSSE), and 701–725 (NLKSHSRTNSGISSASGGSTEPTTP). Ser421 and Ser710 each carry phosphoserine. At Thr724 the chain carries Phosphothreonine. Residues 1138–1382 (IGYLDLLPCR…TTLEKEVPVI (245 aa)) form the Rap-GAP domain. Position 1275 is a phosphoserine (Ser1275). The disordered stretch occupies residues 1301-1325 (DSLNSSQRLSPSSRMKKLPQGRPVP). The span at 1302–1313 (SLNSSQRLSPSS) shows a compositional bias: low complexity.

In terms of assembly, component of the heterodimeric RalGAP1 complex with RALGAPA1 and of the heterodimeric RalGAP2 complex with RALGAPA2. Heterodimerization is required for activity. As to expression, detected in brain, thymus, lung, heart, spleen, liver and testis (at protein level).

Functionally, non-catalytic subunit of the heterodimeric RalGAP1 and RalGAP2 complexes which act as GTPase activators for the Ras-like small GTPases RALA and RALB. The sequence is that of Ral GTPase-activating protein subunit beta from Rattus norvegicus (Rat).